The following is a 487-amino-acid chain: Selenium-binding protein 2 (487 aa).

A2 carries the post-translational modification N-acetylalanine. Selenite-binding residues include C19 and C20.

It belongs to the selenium-binding protein family. Mostly expressed in seedlings, leaves and stems, and, to a lower extent, in flowers and roots.

In terms of biological role, required for the fusion of female gametophyte polar nuclei. The chain is Selenium-binding protein 2 (SBP2) from Arabidopsis thaliana (Mouse-ear cress).